An 830-amino-acid chain; its full sequence is DNA gyrase subunit A (830 aa).

Residues 34–514 (LPDVRDGLKP…NHSDINMEDL (481 aa)) form the Topo IIA-type catalytic domain. Tyr-122 acts as the O-(5'-phospho-DNA)-tyrosine intermediate in catalysis. A GyrA-box motif is present at residues 541 to 547 (QRRGGKG).

The protein belongs to the type II topoisomerase GyrA/ParC subunit family. Heterotetramer, composed of two GyrA and two GyrB chains. In the heterotetramer, GyrA contains the active site tyrosine that forms a transient covalent intermediate with DNA, while GyrB binds cofactors and catalyzes ATP hydrolysis.

It localises to the cytoplasm. The catalysed reaction is ATP-dependent breakage, passage and rejoining of double-stranded DNA.. Functionally, a type II topoisomerase that negatively supercoils closed circular double-stranded (ds) DNA in an ATP-dependent manner to modulate DNA topology and maintain chromosomes in an underwound state. Negative supercoiling favors strand separation, and DNA replication, transcription, recombination and repair, all of which involve strand separation. Also able to catalyze the interconversion of other topological isomers of dsDNA rings, including catenanes and knotted rings. Type II topoisomerases break and join 2 DNA strands simultaneously in an ATP-dependent manner. This is DNA gyrase subunit A from Buchnera aphidicola subsp. Acyrthosiphon pisum (strain APS) (Acyrthosiphon pisum symbiotic bacterium).